We begin with the raw amino-acid sequence, 122 residues long: Fluoride-specific ion channel FluC (122 aa).

Helical transmembrane passes span 4-24 (ILLI…VSGI), 36-56 (LIVN…SLFG), 65-85 (FIIT…YESF), and 100-120 (ILLN…ASMF). Positions 72 and 75 each coordinate Na(+).

This sequence belongs to the fluoride channel Fluc/FEX (TC 1.A.43) family.

It localises to the cell membrane. The catalysed reaction is fluoride(in) = fluoride(out). With respect to regulation, na(+) is not transported, but it plays an essential structural role and its presence is essential for fluoride channel function. Functionally, fluoride-specific ion channel. Important for reducing fluoride concentration in the cell, thus reducing its toxicity. The sequence is that of Fluoride-specific ion channel FluC from Methanococcus maripaludis (strain DSM 14266 / JCM 13030 / NBRC 101832 / S2 / LL).